The following is a 629-amino-acid chain: Chaperone protein DnaK (629 aa).

Residues 576–587 (QAYQQQQDAQAG) are compositionally biased toward low complexity. The disordered stretch occupies residues 576–629 (QAYQQQQDAQAGAAGGAGGMGGMGGMADGPGGAADADGDDEEYVDADFEDVDEE). Residues 588–607 (AAGGAGGMGGMGGMADGPGG) are compositionally biased toward gly residues. Residues 611–629 (ADGDDEEYVDADFEDVDEE) show a composition bias toward acidic residues.

The protein belongs to the heat shock protein 70 family.

In terms of biological role, acts as a chaperone. This Halobacterium salinarum (strain ATCC 29341 / DSM 671 / R1) protein is Chaperone protein DnaK.